A 69-amino-acid chain; its full sequence is Small, acid-soluble spore protein I (69 aa).

Belongs to the SspI family.

The protein resides in the spore core. The chain is Small, acid-soluble spore protein I from Bacillus mycoides (strain KBAB4) (Bacillus weihenstephanensis).